The chain runs to 251 residues: Electron transfer flavoprotein subunit beta, mitochondrial (251 aa).

It belongs to the ETF beta-subunit/FixA family. In terms of assembly, heterodimer of an alpha and a beta subunit. FAD is required as a cofactor. The cofactor is AMP.

It is found in the mitochondrion matrix. In terms of biological role, the electron transfer flavoprotein serves as a specific electron acceptor for several dehydrogenases, including five acyl-CoA dehydrogenases, glutaryl-CoA and sarcosine dehydrogenase. It transfers the electrons to the main mitochondrial respiratory chain via ETF-ubiquinone oxidoreductase (ETF dehydrogenase). Involved in leucine catabolism and in phytol degradation. This Arabidopsis thaliana (Mouse-ear cress) protein is Electron transfer flavoprotein subunit beta, mitochondrial (ETFB).